The sequence spans 616 residues: Protein translocase subunit SecD (616 aa).

Helical transmembrane passes span 11-31 (LMVI…IYGE), 453-473 (QGIN…LFYY), 475-495 (MFGV…VGLM), 497-517 (ILPG…TLGM), 547-569 (YNGA…IILY), and 585-605 (LGVA…VNAL).

It belongs to the SecD/SecF family. SecD subfamily. In terms of assembly, forms a complex with SecF. Part of the essential Sec protein translocation apparatus which comprises SecA, SecYEG and auxiliary proteins SecDF-YajC and YidC.

It localises to the cell inner membrane. Its function is as follows. Part of the Sec protein translocase complex. Interacts with the SecYEG preprotein conducting channel. SecDF uses the proton motive force (PMF) to complete protein translocation after the ATP-dependent function of SecA. In Haemophilus influenzae (strain ATCC 51907 / DSM 11121 / KW20 / Rd), this protein is Protein translocase subunit SecD.